A 412-amino-acid chain; its full sequence is Putative competence-damage inducible protein (412 aa).

It belongs to the CinA family.

This is Putative competence-damage inducible protein from Bacillus cereus (strain ZK / E33L).